A 404-amino-acid polypeptide reads, in one-letter code: Probable tRNA sulfurtransferase (404 aa).

The THUMP domain occupies 60-165 (TAVAESLKQV…EEAAYLSYET (106 aa)). Residues 183-184 (ML), 208-209 (HF), arginine 265, glycine 287, and glutamine 296 contribute to the ATP site.

Belongs to the ThiI family.

Its subcellular location is the cytoplasm. The catalysed reaction is [ThiI sulfur-carrier protein]-S-sulfanyl-L-cysteine + a uridine in tRNA + 2 reduced [2Fe-2S]-[ferredoxin] + ATP + H(+) = [ThiI sulfur-carrier protein]-L-cysteine + a 4-thiouridine in tRNA + 2 oxidized [2Fe-2S]-[ferredoxin] + AMP + diphosphate. It carries out the reaction [ThiS sulfur-carrier protein]-C-terminal Gly-Gly-AMP + S-sulfanyl-L-cysteinyl-[cysteine desulfurase] + AH2 = [ThiS sulfur-carrier protein]-C-terminal-Gly-aminoethanethioate + L-cysteinyl-[cysteine desulfurase] + A + AMP + 2 H(+). The protein operates within cofactor biosynthesis; thiamine diphosphate biosynthesis. Catalyzes the ATP-dependent transfer of a sulfur to tRNA to produce 4-thiouridine in position 8 of tRNAs, which functions as a near-UV photosensor. Also catalyzes the transfer of sulfur to the sulfur carrier protein ThiS, forming ThiS-thiocarboxylate. This is a step in the synthesis of thiazole, in the thiamine biosynthesis pathway. The sulfur is donated as persulfide by IscS. The polypeptide is Probable tRNA sulfurtransferase (Streptococcus pneumoniae (strain ATCC 700669 / Spain 23F-1)).